Consider the following 316-residue polypeptide: Glutathione synthetase (316 aa).

The region spanning 124–310 is the ATP-grasp domain; sequence EKLFTAWFPE…ITGKLMDAIE (187 aa). 150–207 provides a ligand contact to ATP; sequence FREEHGDVILKPLDGMGGASIFRVKENDPNVSVIIETLTNHGQNYAMAQTFVPDISNG. Mg(2+) contacts are provided by E281 and N283.

The protein belongs to the prokaryotic GSH synthase family. Requires Mg(2+) as cofactor. Mn(2+) serves as cofactor.

The enzyme catalyses gamma-L-glutamyl-L-cysteine + glycine + ATP = glutathione + ADP + phosphate + H(+). It participates in sulfur metabolism; glutathione biosynthesis; glutathione from L-cysteine and L-glutamate: step 2/2. The sequence is that of Glutathione synthetase from Vibrio parahaemolyticus serotype O3:K6 (strain RIMD 2210633).